The primary structure comprises 464 residues: 3-isopropylmalate dehydratase large subunit (464 aa).

[4Fe-4S] cluster contacts are provided by Cys337, Cys397, and Cys400.

This sequence belongs to the aconitase/IPM isomerase family. LeuC type 1 subfamily. As to quaternary structure, heterodimer of LeuC and LeuD. [4Fe-4S] cluster is required as a cofactor.

It catalyses the reaction (2R,3S)-3-isopropylmalate = (2S)-2-isopropylmalate. It functions in the pathway amino-acid biosynthesis; L-leucine biosynthesis; L-leucine from 3-methyl-2-oxobutanoate: step 2/4. Catalyzes the isomerization between 2-isopropylmalate and 3-isopropylmalate, via the formation of 2-isopropylmaleate. The sequence is that of 3-isopropylmalate dehydratase large subunit from Bacillus cereus (strain ZK / E33L).